We begin with the raw amino-acid sequence, 430 residues long: Enolase (430 aa).

Glutamine 163 provides a ligand contact to (2R)-2-phosphoglycerate. Catalysis depends on glutamate 205, which acts as the Proton donor. Aspartate 242, glutamate 288, and aspartate 315 together coordinate Mg(2+). Lysine 340, arginine 369, serine 370, and lysine 391 together coordinate (2R)-2-phosphoglycerate. Lysine 340 (proton acceptor) is an active-site residue.

Belongs to the enolase family. Mg(2+) serves as cofactor.

It localises to the cytoplasm. The protein resides in the secreted. Its subcellular location is the cell surface. The enzyme catalyses (2R)-2-phosphoglycerate = phosphoenolpyruvate + H2O. It functions in the pathway carbohydrate degradation; glycolysis; pyruvate from D-glyceraldehyde 3-phosphate: step 4/5. Its function is as follows. Catalyzes the reversible conversion of 2-phosphoglycerate (2-PG) into phosphoenolpyruvate (PEP). It is essential for the degradation of carbohydrates via glycolysis. In Onion yellows phytoplasma (strain OY-M), this protein is Enolase.